Reading from the N-terminus, the 340-residue chain is tRNA-cytidine(32) 2-sulfurtransferase (340 aa).

Positions 74-79 (SGGKDS) match the PP-loop motif motif. Cys-149, Cys-152, and Cys-240 together coordinate [4Fe-4S] cluster.

It belongs to the TtcA family. As to quaternary structure, homodimer. It depends on Mg(2+) as a cofactor. Requires [4Fe-4S] cluster as cofactor.

The protein resides in the cytoplasm. It carries out the reaction cytidine(32) in tRNA + S-sulfanyl-L-cysteinyl-[cysteine desulfurase] + AH2 + ATP = 2-thiocytidine(32) in tRNA + L-cysteinyl-[cysteine desulfurase] + A + AMP + diphosphate + H(+). It functions in the pathway tRNA modification. Functionally, catalyzes the ATP-dependent 2-thiolation of cytidine in position 32 of tRNA, to form 2-thiocytidine (s(2)C32). The sulfur atoms are provided by the cysteine/cysteine desulfurase (IscS) system. This is tRNA-cytidine(32) 2-sulfurtransferase from Burkholderia ambifaria (strain MC40-6).